The sequence spans 451 residues: Secreted RxLR effector protein 70 (451 aa).

A signal peptide spans 1 to 17 (MRGAYYIITALLVVASS). The RxLR-dEER signature appears at 48-65 (RFLRESRDVHDDLANEER). The segment at 303–336 (DAPSNSKHTLGGNKDSSSATTLHKHSKGLSSRPF) is disordered. Residues 305 to 323 (PSNSKHTLGGNKDSSSATT) show a composition bias toward polar residues.

It belongs to the RxLR effector family.

It localises to the secreted. Its subcellular location is the host nucleus. In terms of biological role, secreted effector that completely suppresses the host cell death induced by cell death-inducing proteins. The chain is Secreted RxLR effector protein 70 from Plasmopara viticola (Downy mildew of grapevine).